The sequence spans 222 residues: uncharacterized protein (222 aa).

Positions 1–20 (MRTTSFAKVAALCGLLALSG) are cleaved as a signal peptide. Residue Cys-21 is the site of N-palmitoyl cysteine attachment. Residue Cys-21 is the site of S-diacylglycerol cysteine attachment.

It is found in the cell membrane. This is an uncharacterized protein from Escherichia coli O157:H7.